Here is a 204-residue protein sequence, read N- to C-terminus: LexA repressor (204 aa).

Positions 28–48 form a DNA-binding region, H-T-H motif; sequence RAEIAQELGFKSPNAAEEHLK. Catalysis depends on for autocatalytic cleavage activity residues Ser125 and Lys162.

Belongs to the peptidase S24 family. Homodimer.

It carries out the reaction Hydrolysis of Ala-|-Gly bond in repressor LexA.. Its function is as follows. Represses a number of genes involved in the response to DNA damage (SOS response), including recA and lexA. In the presence of single-stranded DNA, RecA interacts with LexA causing an autocatalytic cleavage which disrupts the DNA-binding part of LexA, leading to derepression of the SOS regulon and eventually DNA repair. In Pseudomonas aeruginosa (strain LESB58), this protein is LexA repressor.